Reading from the N-terminus, the 474-residue chain is RNA-binding protein Nova-1 (474 aa).

Residues 1–12 (MAAAPIQQNGTH) show a composition bias toward polar residues. The tract at residues 1–43 (MAAAPIQQNGTHTGVPIDLDPPDSRKRPLEAPPEAGSTKRTNT) is disordered. A Bipartite nuclear localization signal motif is present at residues 26–42 (KRPLEAPPEAGSTKRTN). KH domains are found at residues 48-115 (QYFL…HGFI), 146-212 (IKQV…VELI), and 396-463 (KDVV…QYLI). Positions 394-474 (GSKDVVEIAV…QRITYEQGVR (81 aa)) are required for RNA binding.

Interacts with PTBP2; the interaction is direct.

It localises to the nucleus. Functionally, functions to regulate alternative splicing in neurons by binding pre-mRNA in a sequence-specific manner to activate exon inclusion or exclusion. It binds specifically to the sequences 5'-YCAY-3' and regulates splicing in only a subset of regulated exons. Binding to an exonic 5'-YCAY-3' cluster changes the protein complexes assembled on pre-mRNA, blocking U1 snRNP binding and exon inclusion, whereas binding to an intronic 5'-YCAY-3' cluster enhances spliceosome assembly and exon inclusion. Binding to 5'-YCAY-3' clusters results in a local and asymmetric action to regulate spliceosome assembly and alternative splicing in neurons. Binding to an exonic 5'-YCAY-3' cluster changed the protein complexes assembled on pre-mRNA, blocking U1 snRNP (small nuclear ribonucleoprotein) binding and exon inclusion, whereas binding to an intronic 5'-YCAY-3' cluster enhanced spliceosome assembly and exon inclusion. With NOVA1, they perform unique biological functions in different brain areas and cell types. Autoregulates its own expression by acting as a splicing repressor. Acts to activate the inclusion of exon E3A in the glycine receptor alpha-2 chain and of exon E9 in gamma-aminobutyric-acid receptor gamma-2 subunit via a distal downstream UCAU-rich intronic splicing enhancer. Acts to regulate a novel glycine receptor alpha-2 chain splice variant (alpha-2N) in developing spinal cord. The polypeptide is RNA-binding protein Nova-1 (Rattus norvegicus (Rat)).